A 175-amino-acid chain; its full sequence is Cytochrome c homolog (175 aa).

Over 1-8 (MSGKELNK) the chain is Cytoplasmic. Residues 9-29 (IVAAILFASLIAMMVGFVANI) form a helical; Signal-anchor membrane-spanning segment. The Periplasmic portion of the chain corresponds to 30-175 (LYKPTLELQH…LFLKTYVHDK (146 aa)). Positions 84, 87, 88, and 150 each coordinate heme c.

It belongs to the cytochrome c family. Post-translationally, binds 1 heme c group covalently per subunit.

Its subcellular location is the cell membrane. May be involved in electron transfer from bc1 complex to aa3. The protein is Cytochrome c homolog (cycM) of Rickettsia conorii (strain ATCC VR-613 / Malish 7).